The chain runs to 741 residues: Catalase-peroxidase (741 aa).

An N-terminal signal peptide occupies residues methionine 1–alanine 23. Residues tryptophan 102–tyrosine 223 constitute a cross-link (tryptophyl-tyrosyl-methioninium (Trp-Tyr) (with M-249)). Catalysis depends on histidine 103, which acts as the Proton acceptor. The tryptophyl-tyrosyl-methioninium (Tyr-Met) (with W-102) cross-link spans tyrosine 223–methionine 249. Histidine 264 is a heme b binding site.

The protein belongs to the peroxidase family. Peroxidase/catalase subfamily. As to quaternary structure, homodimer or homotetramer. The cofactor is heme b. In terms of processing, formation of the three residue Trp-Tyr-Met cross-link is important for the catalase, but not the peroxidase activity of the enzyme.

It catalyses the reaction H2O2 + AH2 = A + 2 H2O. The enzyme catalyses 2 H2O2 = O2 + 2 H2O. Its function is as follows. Bifunctional enzyme with both catalase and broad-spectrum peroxidase activity. This chain is Catalase-peroxidase, found in Francisella tularensis subsp. tularensis (strain WY96-3418).